The primary structure comprises 388 residues: Succinate--CoA ligase [ADP-forming] subunit beta (388 aa).

Positions 9–244 (KKLFAEYGLP…PSQDDPREAH (236 aa)) constitute an ATP-grasp domain. ATP-binding positions include K46, 53-55 (GRG), E99, T102, and E107. The Mg(2+) site is built by N199 and D213. Residues N264 and 321 to 323 (GIV) each bind substrate.

Belongs to the succinate/malate CoA ligase beta subunit family. In terms of assembly, heterotetramer of two alpha and two beta subunits. It depends on Mg(2+) as a cofactor.

The enzyme catalyses succinate + ATP + CoA = succinyl-CoA + ADP + phosphate. The catalysed reaction is GTP + succinate + CoA = succinyl-CoA + GDP + phosphate. Its pathway is carbohydrate metabolism; tricarboxylic acid cycle; succinate from succinyl-CoA (ligase route): step 1/1. Its function is as follows. Succinyl-CoA synthetase functions in the citric acid cycle (TCA), coupling the hydrolysis of succinyl-CoA to the synthesis of either ATP or GTP and thus represents the only step of substrate-level phosphorylation in the TCA. The beta subunit provides nucleotide specificity of the enzyme and binds the substrate succinate, while the binding sites for coenzyme A and phosphate are found in the alpha subunit. The chain is Succinate--CoA ligase [ADP-forming] subunit beta from Aeromonas salmonicida (strain A449).